The sequence spans 306 residues: MAAMEANIFCTFDHKLSIADVGKLTKLVAAVVPIPQRLHLIKHYQLGLHQFVDHTRGYVRLRGLLRNMTLTLMRRVEGNQILLHVPTHGLLYTVLNTGPVTWEKGDALCVLPPLFHGPLARENLLTLGQWELVLPWIVPMPLALEINQRLLIMGLFSLDRSYEEVKAAVQQLQTITFRDATFTIPDPVIDQHLLIDMKTACLSMSMVANLASELTMTYVRKLALEDSSMLLVKCQELLMRLDRERSVGEPRTPARPQHVSPDDEIARLSALFVMLRQLDDLIREQVVFTVCDVSPDNKSATCIFKG.

Belongs to the herpesviridae TRX2 protein family. Interacts with TRX1 and major capisd protein/MCP.

The protein localises to the virion. The protein resides in the host nucleus. Functionally, structural component of the T=16 icosahedral capsid. The capsid is composed of pentamers and hexamers of major capsid protein/MCP, which are linked together by heterotrimers called triplexes. These triplexes are formed by a single molecule of triplex protein 1/TRX1 and two copies of triplex protein 2/TRX2. Additionally, TRX1 is required for efficient transport of TRX2 to the nucleus, which is the site of capsid assembly. The polypeptide is Triplex capsid protein 2 (Human cytomegalovirus (strain AD169) (HHV-5)).